Here is a 404-residue protein sequence, read N- to C-terminus: POU domain, class 2, transcription factor 3L (404 aa).

Disordered regions lie at residues Met-1–Phe-29 and Thr-44–Glu-67. Residues Gly-16 to Phe-29 are compositionally biased toward basic and acidic residues. Residues Gln-187–Glu-235 form the POU-specific domain. The homeobox DNA-binding region spans Lys-259–Val-297. The segment at Met-346–Leu-367 is disordered. Residues Ser-350–Pro-363 show a composition bias toward low complexity.

The protein belongs to the POU transcription factor family. Class-2 subfamily.

The protein resides in the nucleus. Transcription factor that binds to the octamer motif (5'-ATTTGCAT-3') and regulates cell type-specific differentiation pathways. The chain is POU domain, class 2, transcription factor 3L (pou2f3.L) from Xenopus laevis (African clawed frog).